The primary structure comprises 352 residues: DNA polymerase IV (352 aa).

A UmuC domain is found at 6-186 (IIHIDMDAFY…LPLGKIPGVG (181 aa)). The Mg(2+) site is built by D10 and D104. E105 is an active-site residue.

Belongs to the DNA polymerase type-Y family. As to quaternary structure, monomer. Requires Mg(2+) as cofactor.

Its subcellular location is the cytoplasm. The catalysed reaction is DNA(n) + a 2'-deoxyribonucleoside 5'-triphosphate = DNA(n+1) + diphosphate. Functionally, poorly processive, error-prone DNA polymerase involved in untargeted mutagenesis. Copies undamaged DNA at stalled replication forks, which arise in vivo from mismatched or misaligned primer ends. These misaligned primers can be extended by PolIV. Exhibits no 3'-5' exonuclease (proofreading) activity. May be involved in translesional synthesis, in conjunction with the beta clamp from PolIII. The polypeptide is DNA polymerase IV (Neisseria meningitidis serogroup A / serotype 4A (strain DSM 15465 / Z2491)).